We begin with the raw amino-acid sequence, 198 residues long: Elongation factor Ts (198 aa).

The tract at residues 81 to 84 (TDFV) is involved in Mg(2+) ion dislocation from EF-Tu.

The protein belongs to the EF-Ts family.

Its subcellular location is the cytoplasm. Its function is as follows. Associates with the EF-Tu.GDP complex and induces the exchange of GDP to GTP. It remains bound to the aminoacyl-tRNA.EF-Tu.GTP complex up to the GTP hydrolysis stage on the ribosome. This chain is Elongation factor Ts, found in Herpetosiphon aurantiacus (strain ATCC 23779 / DSM 785 / 114-95).